The following is a 517-amino-acid chain: GMP synthase [glutamine-hydrolyzing] (517 aa).

Residues 11–202 enclose the Glutamine amidotransferase type-1 domain; the sequence is KIIVLDYGSQ…AFDVCHAEAN (192 aa). The Nucleophile role is filled by Cys-88. Catalysis depends on residues His-176 and Glu-178. The GMPS ATP-PPase domain maps to 203 to 392; it reads WSMDDFITKQ…LGMPHSLVWR (190 aa). 230 to 236 lines the ATP pocket; sequence SGGVDSS.

As to quaternary structure, homodimer.

It carries out the reaction XMP + L-glutamine + ATP + H2O = GMP + L-glutamate + AMP + diphosphate + 2 H(+). Its pathway is purine metabolism; GMP biosynthesis; GMP from XMP (L-Gln route): step 1/1. In terms of biological role, catalyzes the synthesis of GMP from XMP. This chain is GMP synthase [glutamine-hydrolyzing] (guaA), found in Lacticaseibacillus rhamnosus (Lactobacillus rhamnosus).